Consider the following 326-residue polypeptide: MNHIKVISLVQYSSSVKKLKEEFLRNFKRFDSVEDFSDHHYVSKGKASKQHSKNWVKKVQDEWKILNQNLPETIFVRACESRMDLLRAVIIGAEGTPYHDGLFFFDIQFPDTYPSVPPNVYYHSGGLRINPNLYNCGKVCLSLLGTWHGNARQSWLPKESTMLQVLVSIQALVLNEQPYFNEPGYGLIKGTWLGESKSKVYSENVFLLSLKTMVYSMRKPPQHFEEYVQNHYFVRSHDIVKACNAYKAGAPLGSMVKGGVQDLEQARQSGSKKFKTDVASFMQTVVDEFVKLGVKELAEKPKPPVNNANTENQSKKKTRKRSRSSR.

A UBC core domain is found at 54–214 (NWVKKVQDEW…VFLLSLKTMV (161 aa)). The active-site Glycyl thioester intermediate is Cys-140. Residues 297–326 (LAEKPKPPVNNANTENQSKKKTRKRSRSSR) are disordered. Positions 315–326 (KKKTRKRSRSSR) are enriched in basic residues.

This sequence belongs to the ubiquitin-conjugating enzyme family.

The enzyme catalyses S-ubiquitinyl-[E1 ubiquitin-activating enzyme]-L-cysteine + [E2 ubiquitin-conjugating enzyme]-L-cysteine = [E1 ubiquitin-activating enzyme]-L-cysteine + S-ubiquitinyl-[E2 ubiquitin-conjugating enzyme]-L-cysteine.. The protein operates within protein modification; protein ubiquitination. In terms of biological role, accepts the ubiquitin from the E1 complex and catalyzes its covalent attachment to other proteins. This is Putative ubiquitin-conjugating enzyme E2 38 (UBC38) from Arabidopsis thaliana (Mouse-ear cress).